A 352-amino-acid polypeptide reads, in one-letter code: Protein Wnt-4a (352 aa).

An N-terminal signal peptide occupies residues 1–22 (MSSEYLIRSLLMLFLALFSANA). 11 disulfides stabilise this stretch: Cys78–Cys89, Cys128–Cys136, Cys138–Cys155, Cys206–Cys220, Cys208–Cys215, Cys280–Cys312, Cys297–Cys307, Cys311–Cys351, Cys327–Cys342, Cys329–Cys339, and Cys334–Cys335. An N-linked (GlcNAc...) asparagine glycan is attached at Asn88. The O-palmitoleoyl serine; by PORCN moiety is linked to residue Ser212. The N-linked (GlcNAc...) asparagine glycan is linked to Asn298.

This sequence belongs to the Wnt family. Post-translationally, palmitoleoylation is required for efficient binding to frizzled receptors. Depalmitoleoylation leads to Wnt signaling pathway inhibition. In terms of tissue distribution, caudal forebrain and neural keel, the floor plate, the gill slit and the developing pronephros.

Its subcellular location is the secreted. It is found in the extracellular space. The protein resides in the extracellular matrix. Ligand for members of the frizzled family of seven transmembrane receptors. Plays an important role in embryonic development. This is Protein Wnt-4a (wnt4a) from Danio rerio (Zebrafish).